The sequence spans 95 residues: DASH complex subunit DAD3 (95 aa).

It belongs to the DASH complex DAD3 family. As to quaternary structure, component of the DASH complex consisting of ASK1, DAD1, DAD2, DAD3, DAD4, DAM1, DUO1, HSK3, SPC19 and SPC34, with a stoichiometry of one copy of each subunit per complex. Multiple DASH complexes oligomerize to form a ring that encircles spindle microtubules and organizes the rod-like NDC80 complexes of the outer kinetochore. DASH complex oligomerization strengthens microtubule attachments. On cytoplasmic microtubules, DASH complexes appear to form patches instead of rings.

Its subcellular location is the chromosome. The protein resides in the centromere. The protein localises to the kinetochore. It localises to the cytoplasm. It is found in the cytoskeleton. Its subcellular location is the spindle. The protein resides in the nucleus. Component of the DASH complex that connects microtubules with kinetochores and couples microtubule depolymerisation to chromosome movement; it is involved in retrieving kinetochores to the spindle poles before their re-orientation on the spindle in early mitosis and allows microtubule depolymerization to pull chromosomes apart and resist detachment during anaphase. Kinetochores, consisting of a centromere-associated inner segment and a microtubule-contacting outer segment, play a crucial role in chromosome segregation by mediating the physical connection between centromeric DNA and microtubules. Kinetochores also serve as an input point for the spindle assembly checkpoint, which delays anaphase until all chromosomes have bioriented on the mitotic spindle. This Chaetomium thermophilum (strain DSM 1495 / CBS 144.50 / IMI 039719) (Thermochaetoides thermophila) protein is DASH complex subunit DAD3.